Consider the following 293-residue polypeptide: UPF0282 protein MK0213 (293 aa).

The protein belongs to the UPF0282 family.

The protein is UPF0282 protein MK0213 of Methanopyrus kandleri (strain AV19 / DSM 6324 / JCM 9639 / NBRC 100938).